Consider the following 166-residue polypeptide: Small ribosomal subunit protein uS5 (166 aa).

An S5 DRBM domain is found at 12–75 (YIEKLVQVNR…EAARRNMIQV (64 aa)).

This sequence belongs to the universal ribosomal protein uS5 family. As to quaternary structure, part of the 30S ribosomal subunit. Contacts proteins S4 and S8.

In terms of biological role, with S4 and S12 plays an important role in translational accuracy. Located at the back of the 30S subunit body where it stabilizes the conformation of the head with respect to the body. The sequence is that of Small ribosomal subunit protein uS5 from Pseudomonas syringae pv. tomato (strain ATCC BAA-871 / DC3000).